The primary structure comprises 362 residues: 3-isopropylmalate dehydrogenase (362 aa).

78–91 provides a ligand contact to NAD(+); the sequence is GYKWDSLPPHQRPE. Residues Arg-98, Arg-108, Arg-136, and Asp-226 each coordinate substrate. Mg(2+) is bound by residues Asp-226, Asp-250, and Asp-254. 284-296 provides a ligand contact to NAD(+); it reads GSAPDIAGQDKAN.

The protein belongs to the isocitrate and isopropylmalate dehydrogenases family. LeuB type 1 subfamily. In terms of assembly, homodimer. Requires Mg(2+) as cofactor. Mn(2+) serves as cofactor.

The protein resides in the cytoplasm. The enzyme catalyses (2R,3S)-3-isopropylmalate + NAD(+) = 4-methyl-2-oxopentanoate + CO2 + NADH. It functions in the pathway amino-acid biosynthesis; L-leucine biosynthesis; L-leucine from 3-methyl-2-oxobutanoate: step 3/4. Functionally, catalyzes the oxidation of 3-carboxy-2-hydroxy-4-methylpentanoate (3-isopropylmalate) to 3-carboxy-4-methyl-2-oxopentanoate. The product decarboxylates to 4-methyl-2 oxopentanoate. The sequence is that of 3-isopropylmalate dehydrogenase from Nostoc sp. (strain PCC 7120 / SAG 25.82 / UTEX 2576).